Here is a 345-residue protein sequence, read N- to C-terminus: Inositol phosphoceramide mannosyltransferase 2 (345 aa).

Residues 4–24 (VIYKFAVFAAVNFFLMSSIVL) form a helical membrane-spanning segment. A glycan (N-linked (GlcNAc...) asparagine) is linked at asparagine 55. The helical transmembrane segment at 220 to 240 (YWLPYLTIMLSTGPLSISFLW) threads the bilayer. N-linked (GlcNAc...) asparagine glycosylation occurs at asparagine 269. Residues 296 to 316 (LAYVIVAGFCLYFILSYMFFS) traverse the membrane as a helical segment.

The protein belongs to the glycosyltransferase 32 family.

It is found in the golgi apparatus. The protein resides in the cis-Golgi network membrane. Its subcellular location is the trans-Golgi network membrane. Functionally, with imt1 and imt3, is required for the synthesis of mannosyl phosphorylinositol ceramide (MIPC). Catalyzes the addition of mannosyl to phosphorylinositol ceramide (IPC). MIPC is essential for cell morphology, cell-surface distribution of ergosterol, localization for plasma-membrane transporters, and lipid-raft-mediated endocytosis of plasma membrane proteins to the vacuole. The protein is Inositol phosphoceramide mannosyltransferase 2 of Schizosaccharomyces pombe (strain 972 / ATCC 24843) (Fission yeast).